Consider the following 307-residue polypeptide: L-carnitine dehydrogenase (307 aa).

8–13 (GTGVIG) is an NAD(+) binding site.

Belongs to the 3-hydroxyacyl-CoA dehydrogenase family. L-carnitine dehydrogenase subfamily. As to quaternary structure, homodimer.

The protein localises to the cytoplasm. The enzyme catalyses carnitine + NAD(+) = 3-dehydrocarnitine + NADH + H(+). It participates in amine and polyamine metabolism; carnitine metabolism. In terms of biological role, catalyzes the NAD(+)-dependent oxidation of L-carnitine to 3-dehydrocarnitine. This is L-carnitine dehydrogenase from Oceanobacillus iheyensis (strain DSM 14371 / CIP 107618 / JCM 11309 / KCTC 3954 / HTE831).